The following is a 218-amino-acid chain: Small ribosomal subunit protein uS3c (218 aa).

A KH type-2 domain is found at 43 to 118 (IKNYVQKNMK…KLNISITRIE (76 aa)).

It belongs to the universal ribosomal protein uS3 family. In terms of assembly, part of the 30S ribosomal subunit.

The protein localises to the plastid. The protein resides in the chloroplast. The protein is Small ribosomal subunit protein uS3c (rps3) of Populus alba (White poplar).